A 904-amino-acid chain; its full sequence is Alanine--tRNA ligase (904 aa).

4 residues coordinate Zn(2+): H594, H598, C695, and H699.

This sequence belongs to the class-II aminoacyl-tRNA synthetase family. The cofactor is Zn(2+).

The protein resides in the cytoplasm. The enzyme catalyses tRNA(Ala) + L-alanine + ATP = L-alanyl-tRNA(Ala) + AMP + diphosphate. Its function is as follows. Catalyzes the attachment of alanine to tRNA(Ala) in a two-step reaction: alanine is first activated by ATP to form Ala-AMP and then transferred to the acceptor end of tRNA(Ala). Also edits incorrectly charged Ser-tRNA(Ala) and Gly-tRNA(Ala) via its editing domain. The protein is Alanine--tRNA ligase of Anaeromyxobacter sp. (strain Fw109-5).